Reading from the N-terminus, the 284-residue chain is Bifunctional protein FolD (284 aa).

NADP(+)-binding positions include 166-168, Ser-191, and Ile-232; that span reads GAS.

The protein belongs to the tetrahydrofolate dehydrogenase/cyclohydrolase family. As to quaternary structure, homodimer.

It catalyses the reaction (6R)-5,10-methylene-5,6,7,8-tetrahydrofolate + NADP(+) = (6R)-5,10-methenyltetrahydrofolate + NADPH. The enzyme catalyses (6R)-5,10-methenyltetrahydrofolate + H2O = (6R)-10-formyltetrahydrofolate + H(+). It functions in the pathway one-carbon metabolism; tetrahydrofolate interconversion. Functionally, catalyzes the oxidation of 5,10-methylenetetrahydrofolate to 5,10-methenyltetrahydrofolate and then the hydrolysis of 5,10-methenyltetrahydrofolate to 10-formyltetrahydrofolate. This Thiobacillus denitrificans (strain ATCC 25259 / T1) protein is Bifunctional protein FolD.